Consider the following 438-residue polypeptide: Transposon Ty2-B Gag polyprotein (438 aa).

3 stretches are compositionally biased toward polar residues: residues methionine 1–histidine 11, alanine 19–asparagine 39, and lysine 49–threonine 60. Disordered stretches follow at residues methionine 1–histidine 88, lysine 364–histidine 397, and serine 419–isoleucine 438. Positions glutamate 295 to histidine 397 are RNA-binding. The span at threonine 369–arginine 381 shows a compositional bias: low complexity.

In terms of assembly, homotrimer.

Its subcellular location is the cytoplasm. In terms of biological role, capsid protein (CA) is the structural component of the virus-like particle (VLP), forming the shell that encapsulates the retrotransposons dimeric RNA genome. The particles are assembled from trimer-clustered units and there are holes in the capsid shells that allow for the diffusion of macromolecules. CA also has nucleocapsid-like chaperone activity, promoting primer tRNA(i)-Met annealing to the multipartite primer-binding site (PBS), dimerization of Ty2 RNA and initiation of reverse transcription. The polypeptide is Transposon Ty2-B Gag polyprotein (TY2A-B) (Saccharomyces cerevisiae (strain ATCC 204508 / S288c) (Baker's yeast)).